The sequence spans 688 residues: Two-component response regulator ORR23 (688 aa).

Positions 25–140 (RVLAVDDDPV…ELRNIWQHVI (116 aa)) constitute a Response regulatory domain. Residue Asp76 is modified to 4-aspartylphosphate. The interval 161–212 (PPNADSDHVHGHVTCGSPDQSGRPSKKRKEYCSEEEDEGEVNTQDIDDPSAP) is disordered. Over residues 193–208 (SEEEDEGEVNTQDIDD) the composition is skewed to acidic residues. The myb-like GARP DNA-binding region spans 211 to 270 (APKKPRVVWSVELHRKFVAAVNQLGIDKAVPKRILELMNVEKLTRENVASHLQKYRLYLK).

The protein belongs to the ARR family. Type-B subfamily. In terms of processing, two-component system major event consists of a His-to-Asp phosphorelay between a sensor histidine kinase (HK) and a response regulator (RR). In plants, the His-to-Asp phosphorelay involves an additional intermediate named Histidine-containing phosphotransfer protein (HPt). This multistep phosphorelay consists of a His-Asp-His-Asp sequential transfer of a phosphate group between first a His and an Asp of the HK protein, followed by the transfer to a conserved His of the HPt protein and finally the transfer to an Asp in the receiver domain of the RR protein.

The protein resides in the nucleus. Functionally, transcriptional activator that binds specific DNA sequence. Functions as a response regulator involved in His-to-Asp phosphorelay signal transduction system. Phosphorylation of the Asp residue in the receiver domain activates the ability of the protein to promote the transcription of target genes. May directly activate some type-A response regulators in response to cytokinins. The chain is Two-component response regulator ORR23 from Oryza sativa subsp. indica (Rice).